Here is a 593-residue protein sequence, read N- to C-terminus: Bifunctional purine biosynthesis protein ATIC (593 aa).

The 147-residue stretch at 1–147 folds into the MGS-like domain; the sequence is MAARQQLALL…KNHARVTVVC (147 aa). Residues 1–199 form an IMP cyclohydrolase region; sequence MAARQQLALL…ISDYFRKEYS (199 aa). Residues 13–15, 35–38, 65–68, 102–103, and 126–127 contribute to the IMP site; these read SEK, SGGT, RVKT, CN, and DI. Residue Lys138 is the Proton donor/acceptor; for FAICAR cyclization activity of the active site. Lys200 carries the post-translational modification N6-acetyllysine. The AICAR formyltransferase stretch occupies residues 200–593; that stretch reads KGVSQLPLRY…IHTNLRLFHH (394 aa). 5-amino-1-(5-phospho-beta-D-ribosyl)imidazole-4-carboxamide contacts are provided by residues 208–209, His268, Gly317, Asp340, Asn432, and Arg452; that span reads RY. The active-site Proton acceptor; for AICAR formyltransferase activity is the His268. A (6R)-10-formyltetrahydrofolate-binding site is contributed by Ile453. Phe542 provides a ligand contact to 5-amino-1-(5-phospho-beta-D-ribosyl)imidazole-4-carboxamide. (6R)-10-formyltetrahydrofolate contacts are provided by residues Asp547 and 566-567; that span reads SA. Residue Arg589 coordinates 5-amino-1-(5-phospho-beta-D-ribosyl)imidazole-4-carboxamide.

Belongs to the PurH family. In terms of assembly, homodimer. Associates with internalized INSR complexes on Golgi/endosomal membranes. Interacts with INSR; ATIC together with PRKAA2/AMPK2 and HACD3/PTPLAD1 is proposed to be part of a signaling network regulating INSR autophosphorylation and endocytosis.

It is found in the cytoplasm. It localises to the cytosol. The enzyme catalyses (6R)-10-formyltetrahydrofolate + 5-amino-1-(5-phospho-beta-D-ribosyl)imidazole-4-carboxamide = 5-formamido-1-(5-phospho-D-ribosyl)imidazole-4-carboxamide + (6S)-5,6,7,8-tetrahydrofolate. It carries out the reaction 10-formyldihydrofolate + 5-amino-1-(5-phospho-beta-D-ribosyl)imidazole-4-carboxamide = 5-formamido-1-(5-phospho-D-ribosyl)imidazole-4-carboxamide + 7,8-dihydrofolate. The catalysed reaction is IMP + H2O = 5-formamido-1-(5-phospho-D-ribosyl)imidazole-4-carboxamide. It participates in purine metabolism; IMP biosynthesis via de novo pathway; 5-formamido-1-(5-phospho-D-ribosyl)imidazole-4-carboxamide from 5-amino-1-(5-phospho-D-ribosyl)imidazole-4-carboxamide (10-formyl THF route): step 1/1. Its pathway is purine metabolism; IMP biosynthesis via de novo pathway; IMP from 5-formamido-1-(5-phospho-D-ribosyl)imidazole-4-carboxamide: step 1/1. Its activity is regulated as follows. AMP and XMP inhibit AICAR formyltransferase activity. AICAR formyltransferase activity is competitively inhibited by 2-[5-hydroxy-3-methyl-1-(2-methyl-4-sulfo-phenyl)-1H-pyrazol-4-ylazo]-4-sulfo-benzoic acid (326203-A). FAICAR cyclization is competitively inhibited by 1,5-dihydroimidazo[4,5-c][1,2,6]thiadiazin-4(3H)-one-2,2-dioxide and the corresponding nucleoside and nucleoside monophosphate. In terms of biological role, bifunctional enzyme that catalyzes the last two steps of purine biosynthesis. Acts as a transformylase that incorporates a formyl group to the AMP analog AICAR (5-amino-1-(5-phospho-beta-D-ribosyl)imidazole-4-carboxamide) to produce the intermediate formyl-AICAR (FAICAR). Can use both 10-formyldihydrofolate and 10-formyltetrahydrofolate as the formyl donor in this reaction. Also catalyzes the cyclization of FAICAR to inosine monophosphate (IMP). Promotes insulin receptor/INSR autophosphorylation and is involved in INSR internalization. The polypeptide is Bifunctional purine biosynthesis protein ATIC (ATIC) (Gallus gallus (Chicken)).